Consider the following 130-residue polypeptide: Small ribosomal subunit protein uS9 (130 aa).

It belongs to the universal ribosomal protein uS9 family.

This is Small ribosomal subunit protein uS9 from Pseudomonas fluorescens (strain ATCC BAA-477 / NRRL B-23932 / Pf-5).